The chain runs to 126 residues: Fluoride-specific ion channel FluC 2 (126 aa).

Transmembrane regions (helical) follow at residues 11-31, 34-54, 66-86, and 93-113; these read IFLI…LCEL, GQLG…MIMY, GKIA…TFAV, and FIPA…GVFF. Residues glycine 76 and threonine 79 each contribute to the Na(+) site.

It belongs to the fluoride channel Fluc/FEX (TC 1.A.43) family.

It localises to the cell membrane. It carries out the reaction fluoride(in) = fluoride(out). Its activity is regulated as follows. Na(+) is not transported, but it plays an essential structural role and its presence is essential for fluoride channel function. Functionally, fluoride-specific ion channel. Important for reducing fluoride concentration in the cell, thus reducing its toxicity. The polypeptide is Fluoride-specific ion channel FluC 2 (Methanosarcina acetivorans (strain ATCC 35395 / DSM 2834 / JCM 12185 / C2A)).